The following is an 892-amino-acid chain: Polyribonucleotide nucleotidyltransferase (892 aa).

Residues 407–427 form a disordered region; the sequence is YMHNYEMPPYSTGETGRVGSP. Mg(2+) contacts are provided by D521 and D527. The region spanning 587–646 is the KH domain; it reads PRIITTTVPVDKIGEVIGPKGKMINQIQEDTGAEIAIEDDGTVYISSEGGEAAEKAKEII. Residues 658-730 enclose the S1 motif domain; sequence GETYNGKVVK…DRGKISLAIP (73 aa). Positions 727–892 are disordered; that stretch reads LAIPGFEDQE…VRRDFDPFED (166 aa). Basic and acidic residues-rich tracts occupy residues 739 to 844 and 851 to 877; these read APRR…DRRS and RRDDRNPRYAADENYDEYRADREERSE.

Belongs to the polyribonucleotide nucleotidyltransferase family. Mg(2+) serves as cofactor.

It is found in the cytoplasm. It carries out the reaction RNA(n+1) + phosphate = RNA(n) + a ribonucleoside 5'-diphosphate. In terms of biological role, involved in mRNA degradation. Catalyzes the phosphorolysis of single-stranded polyribonucleotides processively in the 3'- to 5'-direction. This chain is Polyribonucleotide nucleotidyltransferase, found in Bifidobacterium adolescentis (strain ATCC 15703 / DSM 20083 / NCTC 11814 / E194a).